The chain runs to 196 residues: ATP-dependent Clp protease proteolytic subunit (196 aa).

S101 serves as the catalytic Nucleophile. H126 is a catalytic residue.

Belongs to the peptidase S14 family. Component of the chloroplastic Clp protease core complex.

It localises to the plastid. The protein resides in the chloroplast stroma. It catalyses the reaction Hydrolysis of proteins to small peptides in the presence of ATP and magnesium. alpha-casein is the usual test substrate. In the absence of ATP, only oligopeptides shorter than five residues are hydrolyzed (such as succinyl-Leu-Tyr-|-NHMec, and Leu-Tyr-Leu-|-Tyr-Trp, in which cleavage of the -Tyr-|-Leu- and -Tyr-|-Trp bonds also occurs).. Functionally, cleaves peptides in various proteins in a process that requires ATP hydrolysis. Has a chymotrypsin-like activity. Plays a major role in the degradation of misfolded proteins. This Atropa belladonna (Belladonna) protein is ATP-dependent Clp protease proteolytic subunit.